The primary structure comprises 386 residues: Succinate--CoA ligase [ADP-forming] subunit beta (386 aa).

The 235-residue stretch at Lys9–Glu243 folds into the ATP-grasp domain. ATP contacts are provided by residues Lys45, Gly52–Gly54, Glu98, Val101, and Glu106. Mg(2+) contacts are provided by Asn198 and Asp212. Substrate-binding positions include Asn263 and Gly320–Leu322.

This sequence belongs to the succinate/malate CoA ligase beta subunit family. As to quaternary structure, heterotetramer of two alpha and two beta subunits. The cofactor is Mg(2+).

The catalysed reaction is succinate + ATP + CoA = succinyl-CoA + ADP + phosphate. It catalyses the reaction GTP + succinate + CoA = succinyl-CoA + GDP + phosphate. The protein operates within carbohydrate metabolism; tricarboxylic acid cycle; succinate from succinyl-CoA (ligase route): step 1/1. Its function is as follows. Succinyl-CoA synthetase functions in the citric acid cycle (TCA), coupling the hydrolysis of succinyl-CoA to the synthesis of either ATP or GTP and thus represents the only step of substrate-level phosphorylation in the TCA. The beta subunit provides nucleotide specificity of the enzyme and binds the substrate succinate, while the binding sites for coenzyme A and phosphate are found in the alpha subunit. The protein is Succinate--CoA ligase [ADP-forming] subunit beta of Desulfotalea psychrophila (strain LSv54 / DSM 12343).